The chain runs to 237 residues: Lycopene beta-cyclase (237 aa).

A run of 7 helical transmembrane segments spans residues 3–23 (TSYL…LGVV), 38–58 (VGIL…YLIA), 80–100 (EYLF…ALPL), 113–133 (AVLG…LLTV), 137–157 (FYIG…WAVG), 170–192 (AAVL…DGIW), and 213–233 (AFFF…AWVL).

The protein belongs to the lycopene beta-cyclase family.

The protein localises to the cell membrane. The enzyme catalyses a carotenoid psi-end group = a carotenoid beta-end derivative. It carries out the reaction all-trans-lycopene = gamma-carotene. It catalyses the reaction gamma-carotene = all-trans-beta-carotene. It participates in carotenoid biosynthesis; beta-carotene biosynthesis. Functionally, catalyzes the cyclization of both ends of lycopene to form beta-carotene, a retinal precursor. Is required for bacteriorhodopsin biogenesis, a light-driven proton pump with a covalently bound retinal cofactor. The polypeptide is Lycopene beta-cyclase (Halobacterium salinarum (strain ATCC 29341 / DSM 671 / R1)).